Reading from the N-terminus, the 214-residue chain is Peptidyl-tRNA hydrolase (214 aa).

Position 14 (Y14) interacts with tRNA. The active-site Proton acceptor is the H19. The tRNA site is built by Y64, N66, and N113. Positions 184–214 (RINAPPPKPEKKRGSETSDPSAESADHAGGG) are disordered.

Belongs to the PTH family. In terms of assembly, monomer.

It is found in the cytoplasm. It catalyses the reaction an N-acyl-L-alpha-aminoacyl-tRNA + H2O = an N-acyl-L-amino acid + a tRNA + H(+). Its function is as follows. Hydrolyzes ribosome-free peptidyl-tRNAs (with 1 or more amino acids incorporated), which drop off the ribosome during protein synthesis, or as a result of ribosome stalling. Functionally, catalyzes the release of premature peptidyl moieties from peptidyl-tRNA molecules trapped in stalled 50S ribosomal subunits, and thus maintains levels of free tRNAs and 50S ribosomes. This chain is Peptidyl-tRNA hydrolase, found in Roseiflexus castenholzii (strain DSM 13941 / HLO8).